We begin with the raw amino-acid sequence, 332 residues long: MKKIAVDAMGGDNAPQAIVEGVNQALADFSDIEIQLYGDEAKIKTYLKANDRVSIIHTDEKINSDDEPVKAIRKKKQASMVLGAQAVKDGKADAVLSAGNTGALLAAGLLVVGRIKNIDRPGLMSSLPTIDGKGFNMLDLGANAENTAHHLHQYAILGSFYAKNVRGVAHPRIGLLNNGTETTKGDPLRKETFALLAADETLNFIGNVEARDLMNSVADVVVTDGFTGNAVLKSIEGTALGIMEQLKTSIKQAGLRAKLGALLLKNSLYDLKDSLDYSGAGGAVLFGLKAPVVKCHGSSDAKSVYYTIKQIRIMLETDVVGQLVEEFSNRGD.

The protein belongs to the PlsX family. In terms of assembly, homodimer. Probably interacts with PlsY.

The protein localises to the cytoplasm. It catalyses the reaction a fatty acyl-[ACP] + phosphate = an acyl phosphate + holo-[ACP]. Its pathway is lipid metabolism; phospholipid metabolism. Functionally, catalyzes the reversible formation of acyl-phosphate (acyl-PO(4)) from acyl-[acyl-carrier-protein] (acyl-ACP). This enzyme utilizes acyl-ACP as fatty acyl donor, but not acyl-CoA. This is Phosphate acyltransferase from Streptococcus mutans serotype c (strain ATCC 700610 / UA159).